The primary structure comprises 165 residues: uncharacterized protein (165 aa).

Residues 16-36 form a helical membrane-spanning segment; it reads ASISSILNFFFFYIMEYFVAV.

Belongs to the asfivirus F165R family.

The protein localises to the host membrane. This is an uncharacterized protein from African swine fever virus (isolate Tick/Malawi/Lil 20-1/1983) (ASFV).